A 1057-amino-acid polypeptide reads, in one-letter code: Probable E3 ubiquitin-protein ligase HERC4 (1057 aa).

RCC1 repeat units follow at residues 1–51, 52–101, 102–154, 156–207, 208–259, 261–311, and 313–368; these read MLCW…FVLD, DGTV…ALND, KGQV…ALSK, SEVF…VLTL, SGAI…ALTK, GGVF…AFVP, and SGRI…KRIF. Residues 730–1057 form the HECT domain; sequence KNIDYKKPLK…IDHNEGFSLI (328 aa). Residue cysteine 1025 is the Glycyl thioester intermediate of the active site.

Expressed in brain and testis and detected in heart and placenta.

It is found in the cytoplasm. The protein localises to the cytosol. The catalysed reaction is S-ubiquitinyl-[E2 ubiquitin-conjugating enzyme]-L-cysteine + [acceptor protein]-L-lysine = [E2 ubiquitin-conjugating enzyme]-L-cysteine + N(6)-ubiquitinyl-[acceptor protein]-L-lysine.. It participates in protein modification; protein ubiquitination. Functionally, probable E3 ubiquitin-protein ligase involved in either protein trafficking or in the distribution of cellular structures. Required for spermatozoon maturation and fertility, and for the removal of the cytoplasmic droplet of the spermatozoon. E3 ubiquitin-protein ligases accept ubiquitin from an E2 ubiquitin-conjugating enzyme in the form of a thioester and then directly transfer it to targeted substrates. This is Probable E3 ubiquitin-protein ligase HERC4 (HERC4) from Homo sapiens (Human).